We begin with the raw amino-acid sequence, 421 residues long: D-amino acid dehydrogenase (421 aa).

3-17 (VLVLGGGVVGVASAY) contacts FAD.

The protein belongs to the DadA oxidoreductase family. It depends on FAD as a cofactor.

It catalyses the reaction a D-alpha-amino acid + A + H2O = a 2-oxocarboxylate + AH2 + NH4(+). Its pathway is amino-acid degradation; D-alanine degradation; NH(3) and pyruvate from D-alanine: step 1/1. In terms of biological role, oxidative deamination of D-amino acids. The polypeptide is D-amino acid dehydrogenase (Methylobacterium nodulans (strain LMG 21967 / CNCM I-2342 / ORS 2060)).